A 102-amino-acid polypeptide reads, in one-letter code: N(4)-acetylcytidine amidohydrolase (102 aa).

Residues 6-93 (TFFSRFEQDI…IKEIYPGLDE (88 aa)) enclose the ASCH domain. K20 (proton acceptor) is an active-site residue. The active-site Nucleophile is the T23. Residue E73 is the Proton donor of the active site.

The protein belongs to the N(4)-acetylcytidine amidohydrolase family.

It carries out the reaction N(4)-acetylcytidine + H2O = cytidine + acetate + H(+). The enzyme catalyses N(4)-acetyl-2'-deoxycytidine + H2O = 2'-deoxycytidine + acetate + H(+). It catalyses the reaction N(4)-acetylcytosine + H2O = cytosine + acetate + H(+). Its function is as follows. Catalyzes the hydrolysis of N(4)-acetylcytidine (ac4C). The protein is N(4)-acetylcytidine amidohydrolase of Serratia proteamaculans (strain 568).